The sequence spans 69 residues: Pleurain-A4 (69 aa).

Positions 1–22 (MFTLKKTLLLLFFLGTISISLC) are cleaved as a signal peptide. Positions 23-43 (KQERDADEDDGRKMTEEEVKR) are excised as a propeptide. A disulfide bond links Cys63 and Cys69.

The protein belongs to the frog skin active peptide (FSAP) family. Pleurain subfamily. In terms of tissue distribution, expressed by the skin glands.

The protein resides in the secreted. In terms of biological role, antimicrobial peptide. Has activity against Gram-positive and -negative bacteria, and fungi. Has little hemolytic activity on red blood cells. The protein is Pleurain-A4 of Nidirana pleuraden (Yunnan pond frog).